The primary structure comprises 608 residues: Glutamine--fructose-6-phosphate aminotransferase [isomerizing] (608 aa).

Catalysis depends on Cys2, which acts as the Nucleophile; for GATase activity. Positions 2–218 constitute a Glutamine amidotransferase type-2 domain; that stretch reads CGICGIVGHQ…DGDWCELTPD (217 aa). SIS domains lie at 284–423 and 456–598; these read MPFD…ARGT and MAAV…VDQP. Lys603 (for Fru-6P isomerization activity) is an active-site residue.

Homodimer.

It is found in the cytoplasm. The catalysed reaction is D-fructose 6-phosphate + L-glutamine = D-glucosamine 6-phosphate + L-glutamate. Functionally, catalyzes the first step in hexosamine metabolism, converting fructose-6P into glucosamine-6P using glutamine as a nitrogen source. The protein is Glutamine--fructose-6-phosphate aminotransferase [isomerizing] of Gluconobacter oxydans (strain 621H) (Gluconobacter suboxydans).